Consider the following 553-residue polypeptide: CTP synthase (553 aa).

The amidoligase domain stretch occupies residues 1 to 270 (MTKYVFVTGG…DRLICEELRL (270 aa)). S13 contacts CTP. S13 provides a ligand contact to UTP. ATP contacts are provided by residues 14 to 19 (SLGKGI) and D71. Mg(2+) contacts are provided by D71 and E144. Residues 151–153 (DIE), 191–196 (KTKPTQ), and K227 contribute to the CTP site. Residues 191–196 (KTKPTQ) and K227 each bind UTP. The region spanning 295-547 (TIGMVGKYVD…VQAALACQQT (253 aa)) is the Glutamine amidotransferase type-1 domain. G356 is an L-glutamine binding site. C383 acts as the Nucleophile; for glutamine hydrolysis in catalysis. L-glutamine is bound by residues 384–387 (LGMQ), E407, and R473. Catalysis depends on residues H520 and E522.

This sequence belongs to the CTP synthase family. Homotetramer.

The enzyme catalyses UTP + L-glutamine + ATP + H2O = CTP + L-glutamate + ADP + phosphate + 2 H(+). It catalyses the reaction L-glutamine + H2O = L-glutamate + NH4(+). The catalysed reaction is UTP + NH4(+) + ATP = CTP + ADP + phosphate + 2 H(+). It functions in the pathway pyrimidine metabolism; CTP biosynthesis via de novo pathway; CTP from UDP: step 2/2. Its activity is regulated as follows. Allosterically activated by GTP, when glutamine is the substrate; GTP has no effect on the reaction when ammonia is the substrate. The allosteric effector GTP functions by stabilizing the protein conformation that binds the tetrahedral intermediate(s) formed during glutamine hydrolysis. Inhibited by the product CTP, via allosteric rather than competitive inhibition. Catalyzes the ATP-dependent amination of UTP to CTP with either L-glutamine or ammonia as the source of nitrogen. Regulates intracellular CTP levels through interactions with the four ribonucleotide triphosphates. In Burkholderia mallei (strain NCTC 10229), this protein is CTP synthase.